Reading from the N-terminus, the 429-residue chain is MKSKVKMFFAAAIVWSACSSTGYAAAIEKEKHVSELRAEDLFVKKVEGMNKDFIKGADVSSVIALENSGVTFYNTNGKRQDIFTTLKQAGVNYVRVRIWNHPYDSNGNGYGGGNNDVQKAIEIGKRATANGMKVLADFHYSDFWADPAKQKVPKAWANLSFEAKKAKLYEYTKQSLQKMIKEGVDIGMVQVGNETTGGFAGETDWTKMCQLFNEGSRAVRETNSNILVALHFTNPETAGRYSFIAETLSKNKVDYDVFASSYYPFWHGTLQNLTSVLKAVANTYGKKVMVAETSYTYTAEDGDGHGNTAPKSGQTLPYPISVQGQATAVRDVMEAVANTGKAGLGVFYWEPAWIPVGPKTQIEKNKVLWETYGSGWASSYAAEYDPEDAGKWYGGSAVDNQALFDFNGHPLPSLQVFQYAESGHIPKKR.

The signal sequence occupies residues 1-21 (MKSKVKMFFAAAIVWSACSST). Residue 146-149 (DPAK) coordinates substrate. The active-site Proton donor is Glu194. Substrate contacts are provided by residues 233-234 (TN) and His267. The active-site Nucleophile is the Glu292. Thr296 provides a ligand contact to substrate. Residues Asp301, Asp303, His305, and Asn307 each contribute to the Ca(2+) site. The substrate site is built by Lys311 and Asp388. Ca(2+) contacts are provided by Ser396 and Asp399.

Belongs to the glycosyl hydrolase 53 family. Ca(2+) serves as cofactor.

The protein resides in the secreted. The enzyme catalyses The enzyme specifically hydrolyzes (1-&gt;4)-beta-D-galactosidic linkages in type I arabinogalactans.. Functionally, involved in galactan degradation. Degrades arabinose-free galactan to galactooligosaccharides, producing galactotetraose as the main product along with galactotriose, galactobiose, and galactose. Is also able to degrade galactotetraose, galactotriose and galactobiose, suggesting an additional exo-mode of activity. May hydrolyze the beta-1,4-galactan linkages of the galactan portion of arabinogalactan type I, a pectic plant polysaccharide from which most of the arabinose has been removed. This is Endo-beta-1,4-galactanase from Bacillus subtilis (strain 168).